The following is a 463-amino-acid chain: MSLIVTRFAPSPTGYLHIGGLRTAIFNYLFARANQGKFFLRIEDTDLSRNSIEAANAIIEAFKWVGLEHDGEILYQSKRFGIYKEYIQKLLDEDKAYYCYMSKDELDALREEQKARKETPRYDNRYRDFKGTPPKGIEPVVRIKVPQNEIIGFNDGVKGEVKVNTNELDDFIIARSDGTPTYNFVVTIDDALMGITDVIRGDDHLSNTPKQIVLYKALNFKIPNFFHVPMILNEEGQKLSKRHGATNVMDYQEMGYLKEALVNFLARLGWSCHDKEVFSMQELLKWFDPKDLNSSPSCFSWHKLNWLNAHYLKNQSAQRLLELLKPFNFSDLSHLNPTQLDRLLDALKERSQTLKELALKIDEVLIAPVEYEEKVFKKLNQALVMPLLEKFKLELNKANFNDESVLENAMHKIIEEEKIKAGSFMQPLRLALLGKGGGIGLKEALFILGKTESVKRIEEFLKN.

The 'HIGH' region motif lies at 10–20 (PSPTGYLHIGG). Residues 238-242 (KLSKR) carry the 'KMSKS' region motif. Lysine 241 lines the ATP pocket.

Belongs to the class-I aminoacyl-tRNA synthetase family. Glutamate--tRNA ligase type 1 subfamily. Monomer.

It localises to the cytoplasm. The catalysed reaction is tRNA(Glu) + L-glutamate + ATP = L-glutamyl-tRNA(Glu) + AMP + diphosphate. In terms of biological role, catalyzes the attachment of glutamate to tRNA(Glu) in a two-step reaction: glutamate is first activated by ATP to form Glu-AMP and then transferred to the acceptor end of tRNA(Glu). This Helicobacter pylori (strain Shi470) protein is Glutamate--tRNA ligase 1.